A 963-amino-acid polypeptide reads, in one-letter code: Phosphoenolpyruvate carboxylase (963 aa).

Serine 11 carries the post-translational modification Phosphoserine. Catalysis depends on residues histidine 172 and lysine 600.

The protein belongs to the PEPCase type 1 family. In terms of assembly, homotetramer. Mg(2+) serves as cofactor.

The protein localises to the cytoplasm. It catalyses the reaction oxaloacetate + phosphate = phosphoenolpyruvate + hydrogencarbonate. By light-reversible phosphorylation. In terms of biological role, through the carboxylation of phosphoenolpyruvate (PEP) it forms oxaloacetate, a four-carbon dicarboxylic acid source for the tricarboxylic acid cycle. This Picea abies (Norway spruce) protein is Phosphoenolpyruvate carboxylase (PPC).